We begin with the raw amino-acid sequence, 186 residues long: Elongation factor P (186 aa).

Belongs to the elongation factor P family.

It is found in the cytoplasm. The protein operates within protein biosynthesis; polypeptide chain elongation. Functionally, involved in peptide bond synthesis. Stimulates efficient translation and peptide-bond synthesis on native or reconstituted 70S ribosomes in vitro. Probably functions indirectly by altering the affinity of the ribosome for aminoacyl-tRNA, thus increasing their reactivity as acceptors for peptidyl transferase. The protein is Elongation factor P of Prochlorococcus marinus subsp. pastoris (strain CCMP1986 / NIES-2087 / MED4).